Here is a 91-residue protein sequence, read N- to C-terminus: MSLNSAEKAEIINEYKRGDKDTGSPEVQVSLITSRIKYLTDHFKENKKDFHSRRGLQELVNKRRKLLKYLKRNDQDRYQTLIQNLGLRDSY.

This sequence belongs to the universal ribosomal protein uS15 family. Part of the 30S ribosomal subunit. Forms a bridge to the 50S subunit in the 70S ribosome, contacting the 23S rRNA.

Functionally, one of the primary rRNA binding proteins, it binds directly to 16S rRNA where it helps nucleate assembly of the platform of the 30S subunit by binding and bridging several RNA helices of the 16S rRNA. In terms of biological role, forms an intersubunit bridge (bridge B4) with the 23S rRNA of the 50S subunit in the ribosome. The polypeptide is Small ribosomal subunit protein uS15 (Legionella pneumophila (strain Corby)).